The sequence spans 248 residues: tRNA (guanine-N(1)-)-methyltransferase (248 aa).

Residues G113 and 133–138 (IGDFVL) contribute to the S-adenosyl-L-methionine site.

The protein belongs to the RNA methyltransferase TrmD family. As to quaternary structure, homodimer.

The protein resides in the cytoplasm. It catalyses the reaction guanosine(37) in tRNA + S-adenosyl-L-methionine = N(1)-methylguanosine(37) in tRNA + S-adenosyl-L-homocysteine + H(+). Its function is as follows. Specifically methylates guanosine-37 in various tRNAs. In Dehalococcoides mccartyi (strain ATCC BAA-2266 / KCTC 15142 / 195) (Dehalococcoides ethenogenes (strain 195)), this protein is tRNA (guanine-N(1)-)-methyltransferase.